Reading from the N-terminus, the 91-residue chain is MTDVLVVLKVFPDSDEVNLDNLYTDISNKLPKEYRIIRKETEPIAFGLNALILYVQMPEQTEGGTDNLEEVVNNIQGVSHAEVVGITRLGF.

Belongs to the EF-1-beta/EF-1-delta family.

In terms of biological role, promotes the exchange of GDP for GTP in EF-1-alpha/GDP, thus allowing the regeneration of EF-1-alpha/GTP that could then be used to form the ternary complex EF-1-alpha/GTP/AAtRNA. In Saccharolobus islandicus (strain Y.N.15.51 / Yellowstone #2) (Sulfolobus islandicus), this protein is Elongation factor 1-beta.